The primary structure comprises 907 residues: MESAIAEGGASRFSASSGGGGSRGAPQHYPKTAGNSEFLGKTPGQNAQKWIPARSTRRDDNSAANNSANEKERHDAIFRKVRGILNKLTPEKFDKLCLELLNVGVESKLILKGVILLIVDKALEEPKYSSLYAQLCLRLAEDAPNFDGPAAEGQPGQKQSTTFRRLLISKLQDEFENRTRNVDVYDKRENPLLPEEEEQRAIAKIKMLGNIKFIGELGKLDLIHESILHKCIKTLLEKKKRVQLKDMGEDLECLCQIMRTVGPRLDHERAKSLMDQYFARMCSLMLSKELPARIRFLLQDTVELREHHWVPRKAFLDNGPKTINQIRQDAVKDLGVFIPAPMAQGMRSDFFLEGPFMPPRMKMDRDPLGGLADMFGQMPGSGIGTGPGVIQDRFSPTMGRHRSNQLFNGHGGHIMPPTQSQFGEMGGKFMKSQGLSQLYHNQSQGLLSQLQGQSKDMPPRFSKKGQLNADEISLRPAQSFLMNKNQVPKLQPQITMIPPSAQPPRTQTPPLGQTPQLGLKTNPPLIQEKPAKTSKKPPPSKEELLKLTETVVTEYLNSGNANEAVNGVREMRAPKHFLPEMLSKVIILSLDRSDEDKEKASSLISLLKQEGIATSDNFMQAFLNVLDQCPKLEVDIPLVKSYLAQFAARAIISELVSISELAQPLESGTHFPLFLLCLQQLAKLQDREWLTELFQQSKVNMQKMLPEIDQNKDRMLEILEGKGLSFLFPLLKLEKELLKQIKLDPSPQTIYKWIKDNISPKLHVDKGFVNILMTSFLQYISSEVNPPSDETDSSSAPSKEQLEQEKQLLLSFKPVMQKFLHDHVDLQVSALYALQVHCYNSNFPKGMLLRFFVHFYDMEIIEEEAFLAWKEDITQEFPGKGKALFQVNQWLTWLETAEEEESEEEAD.

Residue Met1 is modified to N-acetylmethionine. Residues 1–71 (MESAIAEGGA…SAANNSANEK (71 aa)) form a disordered region. Phosphoserine is present on Ser11. The 231-residue stretch at 78 to 308 (FRKVRGILNK…QDTVELREHH (231 aa)) folds into the MIF4G domain. Thr89 is subject to Phosphothreonine. Arg360 carries the post-translational modification Omega-N-methylarginine. Ser395 is subject to Phosphoserine. Lys431 carries the post-translational modification N6-methyllysine. Ser443 is modified (phosphoserine). Residues 498 to 541 (PPSAQPPRTQTPPLGQTPQLGLKTNPPLIQEKPAKTSKKPPPSK) are disordered. A compositionally biased stretch (polar residues) spans 503–516 (PPRTQTPPLGQTPQ). Position 505 is an omega-N-methylarginine (Arg505). A phosphothreonine mark is found at Thr508 and Thr514. In terms of domain architecture, MI spans 543 to 666 (ELLKLTETVV…SISELAQPLE (124 aa)). Lys575 is covalently cross-linked (Glycyl lysine isopeptide (Lys-Gly) (interchain with G-Cter in SUMO2)). A W2 domain is found at 720–904 (EGKGLSFLFP…ETAEEEESEE (185 aa)). The residue at position 902 (Ser902) is a Phosphoserine.

Belongs to the eukaryotic initiation factor 4G family. As to quaternary structure, interacts with the serine/threonine protein kinases MKNK1 and MKNK2. Binds EIF4A and EIF3. Interacts with MIF4GD. Interacts with DAZAP2. In terms of processing, phosphorylation; hyperphosphorylated during mitosis.

Functionally, appears to play a role in the switch from cap-dependent to IRES-mediated translation during mitosis, apoptosis and viral infection. Cleaved by some caspases and viral proteases. This Bos taurus (Bovine) protein is Eukaryotic translation initiation factor 4 gamma 2 (EIF4G2).